We begin with the raw amino-acid sequence, 431 residues long: tRNA(Ile)-lysidine synthase (431 aa).

Position 25–30 (25–30 (SGGPDS)) interacts with ATP.

Belongs to the tRNA(Ile)-lysidine synthase family.

The protein localises to the cytoplasm. The enzyme catalyses cytidine(34) in tRNA(Ile2) + L-lysine + ATP = lysidine(34) in tRNA(Ile2) + AMP + diphosphate + H(+). Ligates lysine onto the cytidine present at position 34 of the AUA codon-specific tRNA(Ile) that contains the anticodon CAU, in an ATP-dependent manner. Cytidine is converted to lysidine, thus changing the amino acid specificity of the tRNA from methionine to isoleucine. The polypeptide is tRNA(Ile)-lysidine synthase (Lactobacillus gasseri (strain ATCC 33323 / DSM 20243 / BCRC 14619 / CIP 102991 / JCM 1131 / KCTC 3163 / NCIMB 11718 / NCTC 13722 / AM63)).